A 263-amino-acid polypeptide reads, in one-letter code: Interleukin-15 receptor subunit alpha (263 aa).

Positions 1-32 (MASPQLRGYGVQAIPVLLLLLLLLLLPLRVTP) are cleaved as a signal peptide. Residues 33 to 205 (GTTCPPPVSI…ISPHSSKMTK (173 aa)) are Extracellular-facing. Positions 34–98 (TTCPPPVSIE…WTTPSLKCIR (65 aa)) constitute a Sushi domain. 2 disulfides stabilise this stretch: Cys-36/Cys-78 and Cys-62/Cys-96. Asn-51 is a glycosylation site (N-linked (GlcNAc...) asparagine). Low complexity predominate over residues 113 to 135 (TPKVTSQPESPSPSAKEPEAFSP). Residues 113–178 (TPKVTSQPES…HKSSRAPSLA (66 aa)) are disordered. Positions 136–145 (KSDTAMTTET) are enriched in polar residues. A compositionally biased stretch (low complexity) spans 154–169 (TPSQTTSAGTTGTGSH). Residues 206–226 (VAISTSVLLVGAGVVMAFLAW) form a helical membrane-spanning segment. At 227–263 (YIKSRQPSQPCRVEVETMETVPMTVRASSKEDEDTGA) the chain is on the cytoplasmic side.

In terms of assembly, the interleukin-15 receptor IL15R is a heterotrimer of IL15RA, IL2RB and IL2RG. IL15RA also self-associates. Interacts with SYK. N-glycosylated and O-glycosylated. In terms of processing, a soluble form (sIL-15RA) arises from proteolytic shedding of the membrane-anchored receptor. It also binds IL15 and thus interferes with IL15 binding to the membrane receptor. Widely expressed.

The protein resides in the membrane. It localises to the nucleus membrane. The protein localises to the cell surface. Its subcellular location is the secreted. It is found in the extracellular space. High-affinity receptor for interleukin-15. Can signal both in cis and trans where IL15R from one subset of cells presents IL15 to neighboring IL2RG-expressing cells. In neutrophils, binds and activates kinase SYK in response to IL15 stimulation. In neutrophils, required for IL15-induced phagocytosis in a SYK-dependent manner. This chain is Interleukin-15 receptor subunit alpha (Il15ra), found in Mus musculus (Mouse).